The sequence spans 443 residues: Serine--tRNA ligase (443 aa).

246–248 (TAE) is an L-serine binding site. 277 to 279 (RAE) provides a ligand contact to ATP. Glu-300 contributes to the L-serine binding site. 367-370 (EISS) serves as a coordination point for ATP. Ser-402 serves as a coordination point for L-serine.

The protein belongs to the class-II aminoacyl-tRNA synthetase family. Type-1 seryl-tRNA synthetase subfamily. In terms of assembly, homodimer. The tRNA molecule binds across the dimer.

It is found in the cytoplasm. The enzyme catalyses tRNA(Ser) + L-serine + ATP = L-seryl-tRNA(Ser) + AMP + diphosphate + H(+). It catalyses the reaction tRNA(Sec) + L-serine + ATP = L-seryl-tRNA(Sec) + AMP + diphosphate + H(+). It participates in aminoacyl-tRNA biosynthesis; selenocysteinyl-tRNA(Sec) biosynthesis; L-seryl-tRNA(Sec) from L-serine and tRNA(Sec): step 1/1. Catalyzes the attachment of serine to tRNA(Ser). Is also able to aminoacylate tRNA(Sec) with serine, to form the misacylated tRNA L-seryl-tRNA(Sec), which will be further converted into selenocysteinyl-tRNA(Sec). The sequence is that of Serine--tRNA ligase from Bradyrhizobium diazoefficiens (strain JCM 10833 / BCRC 13528 / IAM 13628 / NBRC 14792 / USDA 110).